We begin with the raw amino-acid sequence, 354 residues long: Elongation factor Ts (354 aa).

Residues 81 to 84 are involved in Mg(2+) ion dislocation from EF-Tu; it reads TDFV.

Belongs to the EF-Ts family.

Its subcellular location is the cytoplasm. Functionally, associates with the EF-Tu.GDP complex and induces the exchange of GDP to GTP. It remains bound to the aminoacyl-tRNA.EF-Tu.GTP complex up to the GTP hydrolysis stage on the ribosome. The sequence is that of Elongation factor Ts from Campylobacter curvus (strain 525.92).